A 473-amino-acid polypeptide reads, in one-letter code: Sorting nexin-17 (473 aa).

Residues 1–108 (MHFSIPETEV…SFLRKAQQET (108 aa)) enclose the PX domain. Residues Arg-35, Ser-37, Lys-61, and Arg-74 each coordinate a 1,2-diacyl-sn-glycero-3-phospho-(1D-myo-inositol-3-phosphate). In terms of domain architecture, Ras-associating spans 114-205 (EEVQLEIYLS…YRIILRKSYW (92 aa)). The segment at 114-433 (EEVQLEIYLS…DPNREQVVKL (320 aa)) is FERM-like. The interval 269-433 (GYIKFDPCIT…DPNREQVVKL (165 aa)) is PTB-like F3 module. The segment at 391-431 (SIKKQMQKKRLNGSLQRSDSQQAVKSPPILDSPDPNREQVV) is disordered. Positions 403–414 (GSLQRSDSQQAV) are enriched in polar residues.

It belongs to the sorting nexin family. In terms of assembly, monomer. Interacts with CCDC22, CCDC93, DSCR3 and VPS35L; the interaction with DSCR3 is direct and associates SNX17 with the retriever and CCC complexes.

It is found in the cytoplasm. The protein localises to the early endosome. Its subcellular location is the cytoplasmic vesicle membrane. In terms of biological role, critical regulator of endosomal recycling of numerous surface proteins, including integrins, signaling receptor and channels. Binds to NPxY sequences in the cytoplasmic tails of target cargos. Associates with retriever and CCC complexes to prevent lysosomal degradation and promote cell surface recycling of numerous cargos such as integrins ITGB1, ITGB5 and their associated alpha subunits. Also required for maintenance of normal cell surface levels of APP and LRP1. Interacts with membranes containing phosphatidylinositol 3-phosphate (PtdIns(3P)). This is Sorting nexin-17 (snx17) from Danio rerio (Zebrafish).